Here is a 357-residue protein sequence, read N- to C-terminus: UPF0283 membrane protein HSM_0945 (357 aa).

3 helical membrane-spanning segments follow: residues 67 to 87 (LMAT…QWLV), 96 to 116 (IAFV…GTII), and 213 to 233 (AVES…MFFI).

This sequence belongs to the UPF0283 family.

Its subcellular location is the cell inner membrane. The protein is UPF0283 membrane protein HSM_0945 of Histophilus somni (strain 2336) (Haemophilus somnus).